Reading from the N-terminus, the 744-residue chain is Spalt-like protein sem-4 (744 aa).

Residues 6–32 (AEMAAVSSRRKQSKPRRMSGEGDAMMS) form a disordered region. A compositionally biased stretch (basic residues) spans 13-22 (SRRKQSKPRR). 4 consecutive C2H2-type zinc fingers follow at residues 99–124 (SSCP…LDAH), 305–327 (NQCI…YRTH), 333–355 (FKCK…MGVH), and 411–433 (QQCP…ITEH). The segment covering 487–497 (KNDSSPNTDTS) has biased composition (polar residues). Disordered regions lie at residues 487 to 530 (KNDS…RQDI) and 542 to 562 (KLEE…PKNE). A compositionally biased stretch (basic and acidic residues) spans 499–509 (VEEKITRDDPP). Residues 513-525 (SLSPSNSSDSSSS) show a composition bias toward low complexity. Over residues 551-561 (QQVSTTPNPKN) the composition is skewed to polar residues. C2H2-type zinc fingers lie at residues 589 to 611 (HQCG…MRTH), 617 to 639 (FKCD…MGTH), and 701 to 723 (TVCS…LKEH). The tract at residues 725-744 (NNGSSAAPTPLASAATPPPS) is disordered. Positions 728–744 (SSAAPTPLASAATPPPS) are enriched in low complexity.

The protein belongs to the sal C2H2-type zinc-finger protein family.

The protein resides in the nucleus. Transcription factor, involved in positive and negative modulation of transcription. Binds to multiple DNA sequence motifs in the regulatory elements of target genes, including homeobox selector egl-5 and LIM homeobox mec-3. Involved in cell-fate regulation in multiple lineages, including neuronal, mesodermal and vulval. Required to regulate the fate of PLM touch receptor neurons, acting via negative modulation of transcription of egl-5 and mec-3. May modulate gene expression by interacting with different transcription factors during neuronal and mesodermal cell development. Promotes the proliferative sex myoblast (SM) fate, in a cell autonomous manner, acting via the SoxC transcription factor sem-2. Involved in vulval cell-fate determination, acting by regulating expression of homeobox protein lin-39, and may link lin-39 to incoming signaling pathways. Plays a role in detoxification of reactive oxygen species (ROS), by regulating expression of transcription factor skn-1 and the phase II detoxification genes. In Caenorhabditis elegans, this protein is Spalt-like protein sem-4.